A 389-amino-acid chain; its full sequence is Phosphatidylglycerol--prolipoprotein diacylglyceryl transferase (389 aa).

The next 4 membrane-spanning stretches (helical) occupy residues 28-48 (IIVA…LIYF), 58-78 (FFIF…YFLI), 98-118 (LAIQ…FNVF), and 148-168 (ISVF…QAIG). Residue arginine 169 participates in a 1,2-diacyl-sn-glycero-3-phospho-(1'-sn-glycerol) binding. Transmembrane regions (helical) follow at residues 220–240 (IPLF…IYFV), 281–301 (IVFS…CQTL), and 309–329 (FWTY…TTLF).

Belongs to the Lgt family.

The protein localises to the cell membrane. The enzyme catalyses L-cysteinyl-[prolipoprotein] + a 1,2-diacyl-sn-glycero-3-phospho-(1'-sn-glycerol) = an S-1,2-diacyl-sn-glyceryl-L-cysteinyl-[prolipoprotein] + sn-glycerol 1-phosphate + H(+). It participates in protein modification; lipoprotein biosynthesis (diacylglyceryl transfer). In terms of biological role, catalyzes the transfer of the diacylglyceryl group from phosphatidylglycerol to the sulfhydryl group of the N-terminal cysteine of a prolipoprotein, the first step in the formation of mature lipoproteins. The polypeptide is Phosphatidylglycerol--prolipoprotein diacylglyceryl transferase (Mycoplasma pneumoniae (strain ATCC 29342 / M129 / Subtype 1) (Mycoplasmoides pneumoniae)).